The chain runs to 197 residues: Segregation and condensation protein B (197 aa).

This sequence belongs to the ScpB family. Homodimer. Homodimerization may be required to stabilize the binding of ScpA to the Smc head domains. Component of a cohesin-like complex composed of ScpA, ScpB and the Smc homodimer, in which ScpA and ScpB bind to the head domain of Smc. The presence of the three proteins is required for the association of the complex with DNA.

It is found in the cytoplasm. Functionally, participates in chromosomal partition during cell division. May act via the formation of a condensin-like complex containing Smc and ScpA that pull DNA away from mid-cell into both cell halves. In Bacillus pumilus (strain SAFR-032), this protein is Segregation and condensation protein B.